The primary structure comprises 75 residues: Exodeoxyribonuclease 7 small subunit (75 aa).

It belongs to the XseB family. As to quaternary structure, heterooligomer composed of large and small subunits.

The protein resides in the cytoplasm. The catalysed reaction is Exonucleolytic cleavage in either 5'- to 3'- or 3'- to 5'-direction to yield nucleoside 5'-phosphates.. Functionally, bidirectionally degrades single-stranded DNA into large acid-insoluble oligonucleotides, which are then degraded further into small acid-soluble oligonucleotides. The protein is Exodeoxyribonuclease 7 small subunit of Thermoanaerobacter sp. (strain X514).